Here is an 86-residue protein sequence, read N- to C-terminus: Large ribosomal subunit protein uL23 (86 aa).

Belongs to the universal ribosomal protein uL23 family. In terms of assembly, part of the 50S ribosomal subunit. Contacts protein L29.

Binds to 23S rRNA. One of the proteins that surrounds the polypeptide exit tunnel on the outside of the ribosome. This Methanococcus maripaludis (strain C6 / ATCC BAA-1332) protein is Large ribosomal subunit protein uL23.